The chain runs to 450 residues: D-inositol 3-phosphate glycosyltransferase (450 aa).

His26 serves as a coordination point for 1D-myo-inositol 3-phosphate. UDP-N-acetyl-alpha-D-glucosamine contacts are provided by residues 32–33 (QP) and Gly40. 1D-myo-inositol 3-phosphate contacts are provided by residues 37–42 (DAGGMN), Lys95, Tyr128, Thr152, and Arg172. The UDP-N-acetyl-alpha-D-glucosamine site is built by Arg246, Lys251, and Gln313. Mg(2+)-binding residues include Tyr322, Arg323, and Ala325. Glu335 and Glu343 together coordinate UDP-N-acetyl-alpha-D-glucosamine. Mg(2+) is bound at residue Thr349.

Belongs to the glycosyltransferase group 1 family. MshA subfamily. In terms of assembly, homodimer.

The catalysed reaction is 1D-myo-inositol 3-phosphate + UDP-N-acetyl-alpha-D-glucosamine = 1D-myo-inositol 2-acetamido-2-deoxy-alpha-D-glucopyranoside 3-phosphate + UDP + H(+). Its function is as follows. Catalyzes the transfer of a N-acetyl-glucosamine moiety to 1D-myo-inositol 3-phosphate to produce 1D-myo-inositol 2-acetamido-2-deoxy-glucopyranoside 3-phosphate in the mycothiol biosynthesis pathway. This is D-inositol 3-phosphate glycosyltransferase from Mycolicibacterium vanbaalenii (strain DSM 7251 / JCM 13017 / BCRC 16820 / KCTC 9966 / NRRL B-24157 / PYR-1) (Mycobacterium vanbaalenii).